Consider the following 276-residue polypeptide: Rhomboid protease GlpG (276 aa).

Transmembrane regions (helical) follow at residues 94–114 (GPVTWVMMIACVVVFIAMQIL), 142–162 (ALMHFSLMHILFNLLWWWYLG), 169–189 (LGSGKLIVITLISALLSGYVQ), 192–212 (FSGPWFGGLSGVVYALMGYVW), 229–249 (LIIFALIWIVAGWFDLFGMSM), and 250–270 (ANGAHIAGLAVGLAMAFVDSL). The Nucleophile role is filled by S201. Residue H254 is part of the active site.

It belongs to the peptidase S54 family.

The protein resides in the cell inner membrane. It carries out the reaction Cleaves type-1 transmembrane domains using a catalytic dyad composed of serine and histidine that are contributed by different transmembrane domains.. Functionally, rhomboid-type serine protease that catalyzes intramembrane proteolysis. The polypeptide is Rhomboid protease GlpG (Shigella flexneri serotype 5b (strain 8401)).